Here is a 189-residue protein sequence, read N- to C-terminus: Putative manganese efflux pump MntP (189 aa).

Helical transmembrane passes span 3 to 23 (PVSLIFLAFAMSTDAFAAAIG), 41 to 61 (IIFGVIEAITPLVGWLLGQAA), 65 to 85 (VADWDHWIAFVLLVLLGLHMI), 106 to 128 (WILAVTALATSIDALAVGVGLAF), 141 to 161 (GLATMTMVTLGTMLGRALGAV), and 168 to 188 (MVGGVVLILVGATILYEHLSA).

It belongs to the MntP (TC 9.B.29) family.

It is found in the cell inner membrane. In terms of biological role, probably functions as a manganese efflux pump. This Pseudomonas aeruginosa (strain LESB58) protein is Putative manganese efflux pump MntP.